The sequence spans 461 residues: GTPase Der (461 aa).

EngA-type G domains lie at 25–188 (PVVA…PNVA) and 198–371 (RRVA…ASWD). Residues 31–38 (GRPNVGKS), 78–82 (DTGGW), 140–143 (NKVD), 204–211 (GKPNVGKS), 251–255 (DTAGL), and 316–319 (NKWD) each bind GTP. In terms of domain architecture, KH-like spans 372–454 (TRIATGPLNI…PIRINVRVRE (83 aa)).

It belongs to the TRAFAC class TrmE-Era-EngA-EngB-Septin-like GTPase superfamily. EngA (Der) GTPase family. Associates with the 50S ribosomal subunit.

Functionally, GTPase that plays an essential role in the late steps of ribosome biogenesis. In Mycobacterium leprae (strain TN), this protein is GTPase Der.